The chain runs to 570 residues: Sulfite reductase [NADPH] hemoprotein beta-component (570 aa).

4 residues coordinate [4Fe-4S] cluster: Cys-434, Cys-440, Cys-479, and Cys-483. Cys-483 contributes to the siroheme binding site.

The protein belongs to the nitrite and sulfite reductase 4Fe-4S domain family. Alpha(8)-beta(8). The alpha component is a flavoprotein, the beta component is a hemoprotein. The cofactor is siroheme. It depends on [4Fe-4S] cluster as a cofactor.

It catalyses the reaction hydrogen sulfide + 3 NADP(+) + 3 H2O = sulfite + 3 NADPH + 4 H(+). It functions in the pathway sulfur metabolism; hydrogen sulfide biosynthesis; hydrogen sulfide from sulfite (NADPH route): step 1/1. Functionally, component of the sulfite reductase complex that catalyzes the 6-electron reduction of sulfite to sulfide. This is one of several activities required for the biosynthesis of L-cysteine from sulfate. The sequence is that of Sulfite reductase [NADPH] hemoprotein beta-component from Escherichia coli O1:K1 / APEC.